The primary structure comprises 251 residues: Ubiquinone/menaquinone biosynthesis C-methyltransferase UbiE (251 aa).

Residues Thr-74, Asp-95, and 123–124 each bind S-adenosyl-L-methionine; that span reads NA.

It belongs to the class I-like SAM-binding methyltransferase superfamily. MenG/UbiE family.

It carries out the reaction a 2-demethylmenaquinol + S-adenosyl-L-methionine = a menaquinol + S-adenosyl-L-homocysteine + H(+). It catalyses the reaction a 2-methoxy-6-(all-trans-polyprenyl)benzene-1,4-diol + S-adenosyl-L-methionine = a 5-methoxy-2-methyl-3-(all-trans-polyprenyl)benzene-1,4-diol + S-adenosyl-L-homocysteine + H(+). The protein operates within quinol/quinone metabolism; menaquinone biosynthesis; menaquinol from 1,4-dihydroxy-2-naphthoate: step 2/2. It participates in cofactor biosynthesis; ubiquinone biosynthesis. In terms of biological role, methyltransferase required for the conversion of demethylmenaquinol (DMKH2) to menaquinol (MKH2) and the conversion of 2-polyprenyl-6-methoxy-1,4-benzoquinol (DDMQH2) to 2-polyprenyl-3-methyl-6-methoxy-1,4-benzoquinol (DMQH2). This chain is Ubiquinone/menaquinone biosynthesis C-methyltransferase UbiE, found in Shewanella woodyi (strain ATCC 51908 / MS32).